A 790-amino-acid chain; its full sequence is LPS-assembly protein LptD (790 aa).

An N-terminal signal peptide occupies residues 1 to 20; sequence MRMLRWLILSAFSVAGAVQA.

It belongs to the LptD family. Component of the lipopolysaccharide transport and assembly complex. Interacts with LptE and LptA.

Its subcellular location is the cell outer membrane. In terms of biological role, together with LptE, is involved in the assembly of lipopolysaccharide (LPS) at the surface of the outer membrane. The protein is LPS-assembly protein LptD of Bordetella parapertussis (strain 12822 / ATCC BAA-587 / NCTC 13253).